Here is a 490-residue protein sequence, read N- to C-terminus: NAD/NADP-dependent betaine aldehyde dehydrogenase (490 aa).

Thr-26, Ile-27, and Asp-93 together coordinate K(+). Residue 150 to 153 (GAWN) participates in NADPH binding. Residue Lys-162 is the Charge relay system of the active site. Position 176 to 179 (176 to 179 (KPSE)) interacts with NADPH. Val-180 serves as a coordination point for K(+). Residues Gly-209 and 230–233 (GTST) contribute to the NADPH site. Leu-246 lines the K(+) pocket. Glu-252 functions as the Proton acceptor in the catalytic mechanism. Cys-286 and Glu-387 together coordinate NADPH. The Nucleophile role is filled by Cys-286. Cys-286 carries the cysteine sulfenic acid (-SOH) modification. Positions 457 and 460 each coordinate K(+). Glu-464 functions as the Charge relay system in the catalytic mechanism.

The protein belongs to the aldehyde dehydrogenase family. As to quaternary structure, dimer of dimers. K(+) serves as cofactor.

The catalysed reaction is betaine aldehyde + NAD(+) + H2O = glycine betaine + NADH + 2 H(+). It catalyses the reaction betaine aldehyde + NADP(+) + H2O = glycine betaine + NADPH + 2 H(+). The protein operates within amine and polyamine biosynthesis; betaine biosynthesis via choline pathway; betaine from betaine aldehyde: step 1/1. Its function is as follows. Involved in the biosynthesis of the osmoprotectant glycine betaine. Catalyzes the irreversible oxidation of betaine aldehyde to the corresponding acid. In P.aeruginosa this reaction is a compulsory step in the assimilation of carbon and nitrogen when bacteria are growing in choline or choline precursors. Can use NADP(+) with similar efficiency to NAD(+), a property that can be used by the bacterium to produce the NADPH needed to combat the oxidative stress imposed by the host defenses. The sequence is that of NAD/NADP-dependent betaine aldehyde dehydrogenase from Pseudomonas aeruginosa (strain ATCC 15692 / DSM 22644 / CIP 104116 / JCM 14847 / LMG 12228 / 1C / PRS 101 / PAO1).